We begin with the raw amino-acid sequence, 366 residues long: Flagellar P-ring protein (366 aa).

Positions 1–20 are cleaved as a signal peptide; it reads MVIKFLSALILLLVTTAAQA.

This sequence belongs to the FlgI family. In terms of assembly, the basal body constitutes a major portion of the flagellar organelle and consists of four rings (L,P,S, and M) mounted on a central rod.

It is found in the periplasm. The protein resides in the bacterial flagellum basal body. Assembles around the rod to form the L-ring and probably protects the motor/basal body from shearing forces during rotation. The protein is Flagellar P-ring protein of Escherichia coli (strain SE11).